A 524-amino-acid chain; its full sequence is Bifunctional purine biosynthesis protein PurH (524 aa).

Positions Met1–Val145 constitute an MGS-like domain.

Belongs to the PurH family.

It carries out the reaction (6R)-10-formyltetrahydrofolate + 5-amino-1-(5-phospho-beta-D-ribosyl)imidazole-4-carboxamide = 5-formamido-1-(5-phospho-D-ribosyl)imidazole-4-carboxamide + (6S)-5,6,7,8-tetrahydrofolate. The catalysed reaction is IMP + H2O = 5-formamido-1-(5-phospho-D-ribosyl)imidazole-4-carboxamide. It functions in the pathway purine metabolism; IMP biosynthesis via de novo pathway; 5-formamido-1-(5-phospho-D-ribosyl)imidazole-4-carboxamide from 5-amino-1-(5-phospho-D-ribosyl)imidazole-4-carboxamide (10-formyl THF route): step 1/1. Its pathway is purine metabolism; IMP biosynthesis via de novo pathway; IMP from 5-formamido-1-(5-phospho-D-ribosyl)imidazole-4-carboxamide: step 1/1. This Ralstonia nicotianae (strain ATCC BAA-1114 / GMI1000) (Ralstonia solanacearum) protein is Bifunctional purine biosynthesis protein PurH.